A 396-amino-acid chain; its full sequence is Squamosa promoter-binding-like protein 10 (396 aa).

A disordered region spans residues 74 to 104; the sequence is QSTSINSSSPEDKRCNLASQSSPGDSSSNID. The segment covering 90-104 has biased composition (polar residues); sequence LASQSSPGDSSSNID. Residues 173 to 250 form an SBP-type zinc finger; it reads VPRCQIDGCE…SHHNARRRKP (78 aa). Zn(2+) is bound by residues Cys176, Cys181, Cys198, His201, Cys217, Cys220, His224, and Cys236. The Bipartite nuclear localization signal signature appears at 233-249; the sequence is KRSCRKRLSHHNARRRK.

The cofactor is Zn(2+).

Its subcellular location is the nucleus. Functionally, trans-acting factor that binds specifically to the consensus nucleotide sequence 5'-TNCGTACAA-3'. This is Squamosa promoter-binding-like protein 10 (SPL10) from Arabidopsis thaliana (Mouse-ear cress).